The chain runs to 555 residues: GPI-anchor transamidase component PIGS (555 aa).

The Cytoplasmic segment spans residues alanine 2–arginine 18. Residues arginine 15 and arginine 18 each contribute to the a cardiolipin site. The chain crosses the membrane as a helical span at residues serine 19–threonine 39. Residues glutamate 40–glutamine 517 are Lumenal-facing. Asparagine 267 and asparagine 370 each carry an N-linked (GlcNAc...) asparagine glycan. Residues lysine 518–proline 532 traverse the membrane as a helical segment. Residues isoleucine 533 to aspartate 555 lie on the Cytoplasmic side of the membrane.

Belongs to the PIGS family. As to quaternary structure, heteropentamer. Part of the GPI-anchor transamidase complex, consisting of PIGK, PIGT, PIGS, PIGU and GAA1.

The protein localises to the endoplasmic reticulum membrane. The protein operates within glycolipid biosynthesis; glycosylphosphatidylinositol-anchor biosynthesis. Its function is as follows. Component of the glycosylphosphatidylinositol-anchor (GPI-anchor) transamidase (GPI-T) complex that catalyzes the formation of the linkage between a proprotein and a GPI-anchor and participates in GPI anchored protein biosynthesis. The polypeptide is GPI-anchor transamidase component PIGS (Mus musculus (Mouse)).